A 232-amino-acid polypeptide reads, in one-letter code: Octanoyltransferase (232 aa).

In terms of domain architecture, BPL/LPL catalytic spans 44–219; the sequence is EYTADEIWVV…QLARQFGLVL (176 aa). Substrate contacts are provided by residues 83–90, 150–152, and 163–165; these read RGGQVTYH, ALG, and GLS. Catalysis depends on Cys-181, which acts as the Acyl-thioester intermediate.

It belongs to the LipB family.

The protein localises to the cytoplasm. It carries out the reaction octanoyl-[ACP] + L-lysyl-[protein] = N(6)-octanoyl-L-lysyl-[protein] + holo-[ACP] + H(+). Its pathway is protein modification; protein lipoylation via endogenous pathway; protein N(6)-(lipoyl)lysine from octanoyl-[acyl-carrier-protein]: step 1/2. In terms of biological role, catalyzes the transfer of endogenously produced octanoic acid from octanoyl-acyl-carrier-protein onto the lipoyl domains of lipoate-dependent enzymes. Lipoyl-ACP can also act as a substrate although octanoyl-ACP is likely to be the physiological substrate. This is Octanoyltransferase from Xanthomonas axonopodis pv. citri (strain 306).